Here is an 845-residue protein sequence, read N- to C-terminus: Meiotically up-regulated gene 4 protein (845 aa).

Residues 122–158 form a disordered region; sequence LSTTDEQPKEPSIISISSSSSDPSSSPPPSSSLLKTP. Over residues 132 to 145 the composition is skewed to low complexity; the sequence is PSIISISSSSSDPS. Residues 726–746 traverse the membrane as a helical segment; sequence FLVFLTFTGMTLFILYQLTFP.

It localises to the membrane. In terms of biological role, has a role in meiosis. This is Meiotically up-regulated gene 4 protein (mug4) from Schizosaccharomyces pombe (strain 972 / ATCC 24843) (Fission yeast).